The sequence spans 138 residues: Large ribosomal subunit protein uL16 (138 aa).

The segment covering Met1–Ile18 has biased composition (basic residues). Residues Met1–Asn21 form a disordered region.

The protein belongs to the universal ribosomal protein uL16 family. As to quaternary structure, part of the 50S ribosomal subunit.

Functionally, binds 23S rRNA and is also seen to make contacts with the A and possibly P site tRNAs. This chain is Large ribosomal subunit protein uL16, found in Rhodopirellula baltica (strain DSM 10527 / NCIMB 13988 / SH1).